The chain runs to 96 residues: Co-chaperonin GroES (96 aa).

Belongs to the GroES chaperonin family. Heptamer of 7 subunits arranged in a ring. Interacts with the chaperonin GroEL.

Its subcellular location is the cytoplasm. In terms of biological role, together with the chaperonin GroEL, plays an essential role in assisting protein folding. The GroEL-GroES system forms a nano-cage that allows encapsulation of the non-native substrate proteins and provides a physical environment optimized to promote and accelerate protein folding. GroES binds to the apical surface of the GroEL ring, thereby capping the opening of the GroEL channel. This chain is Co-chaperonin GroES, found in Citrifermentans bemidjiense (strain ATCC BAA-1014 / DSM 16622 / JCM 12645 / Bem) (Geobacter bemidjiensis).